The following is a 629-amino-acid chain: Methyl-accepting chemotaxis protein PctB (629 aa).

The Cytoplasmic segment spans residues 1-10 (MIKSLKFSHK). A helical transmembrane segment spans residues 11-31 (ILLAAALVVIATFSLFTLYND). At 32–276 (SLQRASIRED…AYAMLTKLRT (245 aa)) the chain is on the periplasmic side. The region spanning 37-260 (SIREDLEDYL…LSGLDWYIGI (224 aa)) is the Cache domain. L-arginine is bound by residues Tyr109, Ser115, Tyr121, 126–128 (RPW), Glu146, and Asp173. L-glutamine-binding positions include Ser115, Tyr121, 126–128 (RPW), 144–146 (YME), and Asp173. The helical transmembrane segment at 277-297 (SAIVAALIAVVAIVLLLGMLI) threads the bilayer. The HAMP domain maps to 298 to 352 (RVLMQPLTDMGRAMQDIAQGEGDLTKRLKVTSNDEFGALAISFNRFVERIHESIR). Over 298–629 (RVLMQPLTDM…LRQLVDSFKI (332 aa)) the chain is Cytoplasmic. The Methyl-accepting transducer domain occupies 357–593 (TARQLHDVAQ…SLNMDITEIN (237 aa)). Positions 405–424 (RNAADASHHASDANHQAEDG) are disordered. Positions 410–424 (ASHHASDANHQAEDG) are enriched in basic and acidic residues.

Belongs to the methyl-accepting chemotaxis (MCP) protein family. Monomer in the absence and presence of ligands.

The protein resides in the cell inner membrane. Chemotactic-signal transducers respond to changes in the concentration of attractants and repellents in the environment, transduce a signal from the outside to the inside of the cell, and facilitate sensory adaptation through the variation of the level of methylation. Responds to L-Arg, L-Gln, L-Ala, L-Glu, L-Lys, L-Met and L-Tyr. Also involved in repellent responses to trichloroethylene (TCE), chloroform and methylthiocyanate. The protein is Methyl-accepting chemotaxis protein PctB (pctB) of Pseudomonas aeruginosa (strain ATCC 15692 / DSM 22644 / CIP 104116 / JCM 14847 / LMG 12228 / 1C / PRS 101 / PAO1).